A 315-amino-acid polypeptide reads, in one-letter code: Kiwa protein KwaB (315 aa).

In terms of biological role, component of antiviral defense system Kiwa, composed of KwaA and KwaB. Expression of Kiwa in E.coli (strain MG1655) confers resistance to phages lambda and SECphi18. This Escherichia coli O55:H7 (strain RM12579 / EPEC) protein is Kiwa protein KwaB.